A 419-amino-acid chain; its full sequence is Acetyl transferase GW6a (419 aa).

The 199-residue stretch at 12 to 210 folds into the N-acetyltransferase domain; the sequence is VRVREFDVEK…GHPVHAHRLP (199 aa). Positions 44 to 68 are disordered; it reads VHDHADDGDGAAAKEKKKTKTKTKK. The segment covering 58–68 has biased composition (basic residues); it reads EKKKTKTKTKK.

It belongs to the acetyltransferase family. Interacts (via C-terminus) with HDR3 (via N-terminus). Post-translationally, ubiquitinated at Lys-63 by HDR3. Polyubiquitination of GW6A delays its degradation by the 26S proteasome and enhances GW6A histone acetyltransferase activity. In terms of tissue distribution, expressed in roots, leaf blades, leaf sheaths, shoot apical meristem and young panicles.

The protein localises to the nucleus. Possesses intrinsic histone acetyltransferase activity and acts as a positive regulator of grain weight, hull size, yield, and plant biomass. Regulates postitively grain weight and yield by enlarging spikelet hulls via increasing cell number and accelerating grain filling. In vitro, catalyzes the acetylation of histone H4 at Lys-6 (H4K5ac), Lys-13 (H4K12ac) and Lys-17 (H4K16ac). Involved in the regulation of plastochron (the time interval between leaf initiation event). This Oryza sativa subsp. japonica (Rice) protein is Acetyl transferase GW6a.